Here is a 394-residue protein sequence, read N- to C-terminus: HORMA domain-containing protein 1 (394 aa).

An HORMA domain is found at 24–226; that stretch reads HQSLVLVKRL…TPFHIFKVKV (203 aa). A compositionally biased stretch (basic and acidic residues) spans 253 to 282; the sequence is ILRDKDVEDEQEHYTSDDLDIETKMEEQEK. The interval 253-394 is disordered; the sequence is ILRDKDVEDE…RKFSEPKEHI (142 aa). Over residues 288–300 the composition is skewed to acidic residues; it reads ELEEPSLVCEEDE. 2 stretches are compositionally biased toward polar residues: residues 310–324 and 343–352; these read LSIS…VNKT and KMANGNQPVK. Positions 362–374 are enriched in basic and acidic residues; that stretch reads QHESGRIVLHHFD. The residue at position 376 (Ser376) is a Phosphoserine. The short motif at 383 to 386 is the Nuclear localization signal element; the sequence is KRRK.

As to quaternary structure, interacts with HORMAD2. Interacts with IHO1. Post-translationally, phosphorylated at Ser-377 in a SPO11-dependent manner. As to expression, testis-specific. Over-expressed in carcinomas.

The protein localises to the nucleus. The protein resides in the chromosome. Functionally, plays a key role in meiotic progression. Regulates 3 different functions during meiosis: ensures that sufficient numbers of processed DNA double-strand breaks (DSBs) are available for successful homology search by increasing the steady-state numbers of single-stranded DSB ends. Promotes synaptonemal-complex formation independently of its role in homology search. Plays a key role in the male mid-pachytene checkpoint and the female meiotic prophase checkpoint: required for efficient build-up of ATR activity on unsynapsed chromosome regions, a process believed to form the basis of meiotic silencing of unsynapsed chromatin (MSUC) and meiotic prophase quality control in both sexes. This is HORMA domain-containing protein 1 from Homo sapiens (Human).